Here is a 557-residue protein sequence, read N- to C-terminus: Copine-6 (557 aa).

C2 domains are found at residues 1–127 and 134–263; these read MSDP…TKPL and NAGK…MQWD. Ca(2+)-binding residues include Asp167, Asp173, Asp229, Asp231, and Asp237. Residues 244–303 are linker region; sequence STFQEMQEGTANPGQEMQWDCINPKYRDKKKHYKSSGTVVLAQCTVEKVHTFLDYIMGGC. In terms of domain architecture, VWFA spans 306 to 526; sequence SFTVAIDFTA…ALAKCVLAEV (221 aa).

This sequence belongs to the copine family. In terms of assembly, interacts (via second C2 domain) with OS9 (via C-terminus); this interaction occurs in a calcium-dependent manner in vitro. May interact with NECAB1. Ca(2+) is required as a cofactor.

The protein localises to the cytoplasm. It is found in the cell membrane. It localises to the endosome. The protein resides in the cytoplasmic vesicle. Its subcellular location is the clathrin-coated vesicle. The protein localises to the perikaryon. It is found in the cell projection. It localises to the dendrite. In terms of biological role, calcium-dependent phospholipid-binding protein that plays a role in calcium-mediated intracellular processes. Binds phospholipid membranes in a calcium-dependent manner. Plays a role in dendrite formation by melanocytes. The protein is Copine-6 of Bos taurus (Bovine).